Reading from the N-terminus, the 138-residue chain is Small ribosomal subunit protein uS11c (138 aa).

Residues 1–24 (MAKPIPKVGSRRNGRSSARKSARR) form a disordered region. A compositionally biased stretch (basic residues) spans 9-24 (GSRRNGRSSARKSARR).

This sequence belongs to the universal ribosomal protein uS11 family. As to quaternary structure, part of the 30S ribosomal subunit.

The protein resides in the plastid. The protein localises to the chloroplast. This chain is Small ribosomal subunit protein uS11c, found in Gossypium hirsutum (Upland cotton).